The chain runs to 199 residues: ParB-like protein Saci_1498 (199 aa).

It belongs to the ParB family.

Probably part of a 4-gene DNA damage response locus in which the upstream ups system, in combination with this downstream locus, functions in homologous recombination to rescue Sulfolobales from DNA-damaging threats. This protein might function in the DNA transfer machinery. In Sulfolobus acidocaldarius (strain ATCC 33909 / DSM 639 / JCM 8929 / NBRC 15157 / NCIMB 11770), this protein is ParB-like protein Saci_1498.